Reading from the N-terminus, the 376-residue chain is Putative F-box/FBD/LRR-repeat protein At5g52460 (376 aa).

An F-box domain is found at 16 to 75; the sequence is RDEISSLPDDLLIQILLLVPIKDAVGTMILSKRWRYVWTLLPKLEYSDPGDECESVWKFL. LRR repeat units follow at residues 131–154 and 199–224; these read CKTLVELTLSDKIIVDVPSSVCLP and FAKVHKLRLEKPHIDVVCHTDDKFLK. Positions 296-348 constitute an FBD domain; the sequence is CHGTNQGTVPRCLSAHLDEEFVWHGYRGNEEETQLIRYIFANAKCLKKREIST.

The protein is Putative F-box/FBD/LRR-repeat protein At5g52460 (EDA41) of Arabidopsis thaliana (Mouse-ear cress).